Reading from the N-terminus, the 644-residue chain is Exoribonuclease 2 (644 aa).

Residues 189 to 516 (REDLTALNFV…NHRLLKAMIT (328 aa)) enclose the RNB domain. The 83-residue stretch at 561–643 (DTRFTAEIID…ETRNVIARPV (83 aa)) folds into the S1 motif domain.

The protein belongs to the RNR ribonuclease family. RNase II subfamily.

It localises to the cytoplasm. It catalyses the reaction Exonucleolytic cleavage in the 3'- to 5'-direction to yield nucleoside 5'-phosphates.. Involved in mRNA degradation. Hydrolyzes single-stranded polyribonucleotides processively in the 3' to 5' direction. This Yersinia pseudotuberculosis serotype IB (strain PB1/+) protein is Exoribonuclease 2.